The sequence spans 379 residues: Chaperone protein DnaJ (379 aa).

A J domain is found at 5–70 (DYYEVLGVSR…QKRAAYDQYG (66 aa)). A CR-type zinc finger spans residues 134-212 (GVTKEIRIPT…CHGHGRVEKS (79 aa)). C147, C150, C164, C167, C186, C189, C200, and C203 together coordinate Zn(2+). CXXCXGXG motif repeat units follow at residues 147–154 (CDVCHGSG), 164–171 (CPTCHGAG), 186–193 (CPHCHGRG), and 200–207 (CNKCHGHG).

This sequence belongs to the DnaJ family. As to quaternary structure, homodimer. The cofactor is Zn(2+).

The protein localises to the cytoplasm. In terms of biological role, participates actively in the response to hyperosmotic and heat shock by preventing the aggregation of stress-denatured proteins and by disaggregating proteins, also in an autonomous, DnaK-independent fashion. Unfolded proteins bind initially to DnaJ; upon interaction with the DnaJ-bound protein, DnaK hydrolyzes its bound ATP, resulting in the formation of a stable complex. GrpE releases ADP from DnaK; ATP binding to DnaK triggers the release of the substrate protein, thus completing the reaction cycle. Several rounds of ATP-dependent interactions between DnaJ, DnaK and GrpE are required for fully efficient folding. Also involved, together with DnaK and GrpE, in the DNA replication of plasmids through activation of initiation proteins. This chain is Chaperone protein DnaJ, found in Yersinia pestis bv. Antiqua (strain Antiqua).